A 347-amino-acid chain; its full sequence is Histidinol-phosphate aminotransferase (347 aa).

N6-(pyridoxal phosphate)lysine is present on K209.

This sequence belongs to the class-II pyridoxal-phosphate-dependent aminotransferase family. Histidinol-phosphate aminotransferase subfamily. As to quaternary structure, homodimer. It depends on pyridoxal 5'-phosphate as a cofactor.

The enzyme catalyses L-histidinol phosphate + 2-oxoglutarate = 3-(imidazol-4-yl)-2-oxopropyl phosphate + L-glutamate. Its pathway is amino-acid biosynthesis; L-histidine biosynthesis; L-histidine from 5-phospho-alpha-D-ribose 1-diphosphate: step 7/9. This Geotalea daltonii (strain DSM 22248 / JCM 15807 / FRC-32) (Geobacter daltonii) protein is Histidinol-phosphate aminotransferase.